The chain runs to 34 residues: Unknown protein 5 (34 aa).

The sequence is that of Unknown protein 5 from Pseudotsuga menziesii (Douglas-fir).